Here is a 710-residue protein sequence, read N- to C-terminus: Choline transporter-like protein 2 (710 aa).

Residues 1–34 (MEDDGKSPPDSAYGEPKKYDPNFKGPIQNRGCTD) lie on the Cytoplasmic side of the membrane. Residues 35-55 (ILCCILIVLGIIAYVAVGIVA) traverse the membrane as a helical segment. Residues 56-236 (WTYGDPRKVI…KIFEDYTVSW (181 aa)) lie on the Extracellular side of the membrane. Asn147, Asn190, and Asn204 each carry an N-linked (GlcNAc...) asparagine glycan. The chain crosses the membrane as a helical span at residues 237–257 (YWIIIGLIIAMVISLIFVVLL). The Cytoplasmic segment spans residues 258-260 (RFL). The chain crosses the membrane as a helical span at residues 261–281 (AGIMVWVMIVLVIAVMGYGIF). Residues 282–319 (HCYMEYARLKGQSGSDVTLKDIGFQTDIRVYLHLRQTW) lie on the Extracellular side of the membrane. Residues 320-340 (LAFMIILCILEVIVILLLIFL) traverse the membrane as a helical segment. Over 341–368 (RKRIMIAIALIKEASRAVGFVMSSLVFP) the chain is Cytoplasmic. Residues 369–389 (LFTFLLVCLCIAYWAITAVFL) traverse the membrane as a helical segment. The Extracellular portion of the chain corresponds to 390 to 458 (STSNEAVYKV…FQIYNAFMFL (69 aa)). Asn401, Asn418, and Asn421 each carry an N-linked (GlcNAc...) asparagine glycan. Residues 459-481 (WLANFVIALGQVTLAGAFASYYW) form a helical membrane-spanning segment. Topologically, residues 482–508 (AFKKPDDMPAFPIFSSLGRALRYHTGS) are cytoplasmic. The chain crosses the membrane as a helical span at residues 509-529 (LAFGSLILAIVQMIRILLEYL). Residues 530 to 567 (DHKLKGADNKCARFLLCCLKCCFWCLEKFIKFLNRNAY) are Extracellular-facing. Residues 568 to 588 (IMIAIYGTNFCTSARNAFFLL) traverse the membrane as a helical segment. The Cytoplasmic portion of the chain corresponds to 589 to 603 (MRNIIRVAVLDKVTD). The helical transmembrane segment at 604-624 (FLLFLGKLLVVGCVGILAFFF) threads the bilayer. At 625–642 (FSRRIQIVQDTAPTLNYY) the chain is on the extracellular side. The chain crosses the membrane as a helical span at residues 643–663 (WVPILTVILGSYLIAHGFFSV). Topologically, residues 664 to 710 (YGMCVDTLFLCFLEDLERNDGSTERPYFMSGSLQKLLNKSNQTKPDK) are cytoplasmic.

It belongs to the CTL (choline transporter-like) family.

It localises to the cell membrane. It is found in the mitochondrion outer membrane. It catalyses the reaction choline(out) + n H(+)(in) = choline(in) + n H(+)(out). The enzyme catalyses ethanolamine(out) + n H(+)(in) = ethanolamine(in) + n H(+)(out). Its function is as follows. Choline/H+ antiporter, mainly in mitochodria. Also acts as a low-affinity ethanolamine/H+ antiporter, regulating the supply of extracellular ethanolamine (Etn) for the CDP-Etn pathway, redistribute intracellular Etn and balance the CDP-Cho and CDP-Etn arms of the Kennedy pathway. This is Choline transporter-like protein 2 (slc44a2) from Xenopus laevis (African clawed frog).